We begin with the raw amino-acid sequence, 149 residues long: Calmodulin-6 (149 aa).

EF-hand domains are found at residues 8 to 43, 44 to 79, 81 to 116, and 117 to 149; these read DQISEFKEAFSLFDKDGDGCITTKELGTVMRSLGQN, PTEAELQDMINEVDADGNGTIDFPEFLNLMARKMKD, DSEEELKEAFRVFDKDQNGFISAAELRHVMTNLGEK, and LSDEEVDEMIREADVDGDGQINYEEFVKVMMAK. Ca(2+) contacts are provided by Asp-21, Asp-23, Asp-25, Cys-27, Glu-32, Asp-57, Asp-59, Asn-61, Thr-63, Glu-68, Asp-94, Asp-96, Asn-98, Glu-105, Asp-130, Asp-132, Asp-134, Gln-136, and Glu-141.

It belongs to the calmodulin family. As to quaternary structure, interacts with KCBP.

Functionally, calmodulin mediates the control of a large number of enzymes, ion channels and other proteins by Ca(2+). Among the enzymes to be stimulated by the calmodulin-Ca(2+) complex are a number of protein kinases and phosphatases. The sequence is that of Calmodulin-6 (CAM6) from Arabidopsis thaliana (Mouse-ear cress).